The chain runs to 304 residues: Acetaldehyde dehydrogenase 4 (304 aa).

The active-site Acyl-thioester intermediate is the Cys131. Residues 162–170 (SAGPGTRKN) and Asn273 each bind NAD(+).

It belongs to the acetaldehyde dehydrogenase family. Heterotetramer composed of two BphI (aldolase) and two BphJ (dehydrogenase).

The catalysed reaction is acetaldehyde + NAD(+) + CoA = acetyl-CoA + NADH + H(+). It catalyses the reaction propanal + NAD(+) + CoA = propanoyl-CoA + NADH + H(+). Its pathway is xenobiotic degradation; polychlorinated biphenyl degradation. Bound pyruvate or other intermediates in the aldol addition reaction catalyzed by BphI allosterically activates BphJ reductive deacylation activity. Functionally, catalyzes the conversion of acetaldehyde or propanal to acetyl-CoA or propanoyl-CoA, respectively, using NAD(+) and coenzyme A. Displays broad specificity since it can utilize aliphatic aldehydes from two to five carbons in length as substrates; the aldehyde substrates can be directly channeled from the aldolase BphI to the dehydrogenase BphJ. Is the final enzyme in the meta-cleavage pathway for the degradation of polychlorinated biphenyls (PCBs). Is also able to utilize NADP(+) instead of NAD(+). Is not active with succinic semialdehyde or picolinaldehyde as substrates. Can also catalyze the reverse reaction, i.e. the reductive deacylation of acetyl-CoA to acetaldehyde, which is then channeled to the BphI active site. The BphI-BphJ enzyme complex exhibits unique bidirectionality in substrate channeling and allosteric activation. The chain is Acetaldehyde dehydrogenase 4 (bphJ) from Paraburkholderia xenovorans (strain LB400).